We begin with the raw amino-acid sequence, 448 residues long: Putative F-box/LRR-repeat protein At5g25860 (448 aa).

The 48-residue stretch at 11-58 (RDAVNCLPDEILAKILSYLPTKRAVSTSLISKRWRNLFALMIQLFESQ) folds into the F-box domain. LRR repeat units follow at residues 82–106 (QESF…SILC), 185–214 (FLHA…FLHD), 215–240 (LRGY…TVHF), 310–341 (TLSL…YFES), and 342–367 (NEKE…VLKG).

The sequence is that of Putative F-box/LRR-repeat protein At5g25860 from Arabidopsis thaliana (Mouse-ear cress).